The following is a 699-amino-acid chain: Elongation factor G (699 aa).

The tr-type G domain occupies 8-290 (NKYRNLGIMA…KVIELLPSPV (283 aa)). GTP is bound by residues 17-24 (AHIDAGKT), 88-92 (DTPGH), and 142-145 (NKMD).

The protein belongs to the TRAFAC class translation factor GTPase superfamily. Classic translation factor GTPase family. EF-G/EF-2 subfamily.

The protein resides in the cytoplasm. Its function is as follows. Catalyzes the GTP-dependent ribosomal translocation step during translation elongation. During this step, the ribosome changes from the pre-translocational (PRE) to the post-translocational (POST) state as the newly formed A-site-bound peptidyl-tRNA and P-site-bound deacylated tRNA move to the P and E sites, respectively. Catalyzes the coordinated movement of the two tRNA molecules, the mRNA and conformational changes in the ribosome. This is Elongation factor G from Dichelobacter nodosus (strain VCS1703A).